A 732-amino-acid chain; its full sequence is Acylamino-acid-releasing enzyme (732 aa).

An N-acetylmethionine modification is found at Met1. Ser187 is modified (phosphoserine). Active-site charge relay system residues include Ser587, Asp675, and His707.

The protein belongs to the peptidase S9C family. In terms of assembly, homotetramer. As to expression, expressed in the liver (at protein level).

The protein resides in the cytoplasm. The enzyme catalyses Cleavage of an N-acetyl or N-formyl amino acid from the N-terminus of a polypeptide.. With respect to regulation, homotetramerization is required for activity. Tetramerization results in the formation of a gated channel which is involved in substrate selection and substrate access to the catalytic sites. Functionally, this enzyme catalyzes the hydrolysis of the N-terminal peptide bond of an N-acetylated peptide to generate an N-acetylated amino acid and a peptide with a free N-terminus. It preferentially cleaves off Ac-Ala, Ac-Met and Ac-Ser. Also, involved in the degradation of oxidized and glycated proteins. The sequence is that of Acylamino-acid-releasing enzyme (APEH) from Sus scrofa (Pig).